Here is a 486-residue protein sequence, read N- to C-terminus: LON peptidase N-terminal domain and RING finger protein C14F5.10c (486 aa).

The RING-type zinc-finger motif lies at 169–207 (CQICFGMLYDPVVSPCGHTFCGPCLMQALTQSPQCPTCR). In terms of domain architecture, Lon N-terminal spans 250 to 472 (ESWLPLFISM…LVLIWLTQLQ (223 aa)).

This Schizosaccharomyces pombe (strain 972 / ATCC 24843) (Fission yeast) protein is LON peptidase N-terminal domain and RING finger protein C14F5.10c.